Reading from the N-terminus, the 563-residue chain is Probable tRNA (uracil-O(2)-)-methyltransferase (563 aa).

Residues 536–563 (TIRKAPCWMSLHHPDGCPVGQEACRYEH) form a C3H1-type zinc finger.

The protein belongs to the TRM44 family.

The protein localises to the cytoplasm. It catalyses the reaction uridine(44) in tRNA(Ser) + S-adenosyl-L-methionine = 2'-O-methyluridine(44) in tRNA(Ser) + S-adenosyl-L-homocysteine + H(+). Probable adenosyl-L-methionine (AdoMet)-dependent tRNA (uracil-O(2)-)-methyltransferase. This chain is Probable tRNA (uracil-O(2)-)-methyltransferase, found in Caenorhabditis elegans.